The primary structure comprises 245 residues: Carbohydrate deacetylase (245 aa).

Positions 59 and 125 each coordinate Mg(2+).

Belongs to the YdjC deacetylase family. In terms of assembly, homodimer. Mg(2+) is required as a cofactor.

Probably catalyzes the deacetylation of acetylated carbohydrates an important step in the degradation of oligosaccharides. The protein is Carbohydrate deacetylase of Listeria monocytogenes serotype 4a (strain HCC23).